The sequence spans 778 residues: Arf-GAP with coiled-coil, ANK repeat and PH domain-containing protein 2 (778 aa).

The BAR domain maps to 1–226 (MKMTVDFEEC…MKDLGAQLDR (226 aa)). The PH domain occupies 266 to 361 (GIVMEGYLFK…WIKAVQTSIA (96 aa)). The segment at 371–391 (SEKLDKKSSPSTGSLDSGNES) is disordered. The span at 379–388 (SPSTGSLDSG) shows a compositional bias: polar residues. A phosphoserine mark is found at S384 and S387. The 122-residue stretch at 399–520 (ESALQRVQCV…KFVDKYSVSS (122 aa)) folds into the Arf-GAP domain. The segment at 414–437 (CCDCGLADPRWASINLGITLCIEC) adopts a C4-type zinc-finger fold. Residues 518–596 (VSSSPPEQEK…EPEGERQDSS (79 aa)) are disordered. S521 is subject to Phosphoserine. Positions 524–539 (EQEKKVVSKDSEEKRL) are enriched in basic and acidic residues. Over residues 550–569 (VRTSIQSSVKSNDSGIQQSS) the composition is skewed to polar residues. 2 positions are modified to phosphoserine: S581 and S584. ANK repeat units follow at residues 640-669 (NKATPLIQAVLGGSLVTCEFLLQNGANVNQ), 673-702 (QGRGPLHHATVLGHTGQVCLFLKRGANQHA), and 706-735 (EGKDPLSIAVEAANADIVTLLRLARMNEEM). Y742 carries the post-translational modification Phosphotyrosine. S775 is subject to Phosphoserine.

Interacts with RAB35 (GTP-bound form); the interaction is direct and probably recruits ACAP2 to membranes. Interacts with MICALL1; the interaction is indirect through RAB35.

Its subcellular location is the endosome membrane. The protein resides in the cell membrane. GAP activity stimulated by phosphatidylinositol 4,5-bisphosphate (PIP2) and phosphatidic acid. Its function is as follows. GTPase-activating protein (GAP) for ADP ribosylation factor 6 (ARF6). Doesn't show GAP activity for RAB35. This is Arf-GAP with coiled-coil, ANK repeat and PH domain-containing protein 2 (ACAP2) from Oryctolagus cuniculus (Rabbit).